The chain runs to 226 residues: DNA mismatch repair protein MutH (226 aa).

Belongs to the MutH family.

Its subcellular location is the cytoplasm. Its function is as follows. Sequence-specific endonuclease that cleaves unmethylated GATC sequences. It is involved in DNA mismatch repair. In Actinobacillus pleuropneumoniae serotype 3 (strain JL03), this protein is DNA mismatch repair protein MutH.